The sequence spans 215 residues: CASP-like protein 1U3 (215 aa).

Residues 1-13 are Cytoplasmic-facing; it reads MHDEEKKEPKWVT. A helical transmembrane segment spans residues 14–34; the sequence is AVSIAGRIAGMGLAVAAAVLM. At 35 to 68 the chain is on the extracellular side; the sequence is STASQCTVYYAAPAASAYGGAARARTVTYSDFPP. A helical membrane pass occupies residues 69–89; that stretch reads FVFLVGAASIAAFLEAIAIFL. The Cytoplasmic segment spans residues 90-105; it reads VVWKKGKDKTTKVLMP. A helical membrane pass occupies residues 106–126; sequence LLGVAVPALLYSATGAAFAAV. The Extracellular segment spans residues 127–161; it reads SDMSYCSANGKRVSICAGSAAAGGGVSGGTNFCSQ. The helical transmembrane segment at 162 to 182 threads the bilayer; the sequence is VHIAVYLSLAAAVAVSVAEVV. Residues 183 to 215 lie on the Cytoplasmic side of the membrane; that stretch reads RGLGGSASGGGSDSDSSSSSESGGCDHGCHHKH. The interval 187–215 is disordered; that stretch reads GSASGGGSDSDSSSSSESGGCDHGCHHKH. Positions 195 to 205 are enriched in low complexity; that stretch reads DSDSSSSSESG.

Belongs to the Casparian strip membrane proteins (CASP) family. Homodimer and heterodimers.

Its subcellular location is the cell membrane. This chain is CASP-like protein 1U3, found in Sorghum bicolor (Sorghum).